We begin with the raw amino-acid sequence, 222 residues long: Phosphoribosylformylglycinamidine synthase subunit PurQ (222 aa).

The region spanning 2–222 is the Glutamine amidotransferase type-1 domain; sequence KAAVITFPGS…RALLGGMALV (221 aa). Residue Cys-86 is the Nucleophile of the active site. Residues His-194 and Glu-196 contribute to the active site.

As to quaternary structure, part of the FGAM synthase complex composed of 1 PurL, 1 PurQ and 2 PurS subunits.

The protein localises to the cytoplasm. It carries out the reaction N(2)-formyl-N(1)-(5-phospho-beta-D-ribosyl)glycinamide + L-glutamine + ATP + H2O = 2-formamido-N(1)-(5-O-phospho-beta-D-ribosyl)acetamidine + L-glutamate + ADP + phosphate + H(+). The enzyme catalyses L-glutamine + H2O = L-glutamate + NH4(+). The protein operates within purine metabolism; IMP biosynthesis via de novo pathway; 5-amino-1-(5-phospho-D-ribosyl)imidazole from N(2)-formyl-N(1)-(5-phospho-D-ribosyl)glycinamide: step 1/2. Functionally, part of the phosphoribosylformylglycinamidine synthase complex involved in the purines biosynthetic pathway. Catalyzes the ATP-dependent conversion of formylglycinamide ribonucleotide (FGAR) and glutamine to yield formylglycinamidine ribonucleotide (FGAM) and glutamate. The FGAM synthase complex is composed of three subunits. PurQ produces an ammonia molecule by converting glutamine to glutamate. PurL transfers the ammonia molecule to FGAR to form FGAM in an ATP-dependent manner. PurS interacts with PurQ and PurL and is thought to assist in the transfer of the ammonia molecule from PurQ to PurL. This is Phosphoribosylformylglycinamidine synthase subunit PurQ from Cereibacter sphaeroides (strain ATCC 17023 / DSM 158 / JCM 6121 / CCUG 31486 / LMG 2827 / NBRC 12203 / NCIMB 8253 / ATH 2.4.1.) (Rhodobacter sphaeroides).